The primary structure comprises 79 residues: Short neurotoxin 6 (79 aa).

The first 21 residues, 1–21, serve as a signal peptide directing secretion; that stretch reads MKTLLLTLVMVTIMCLDLGYT. Disulfide bonds link cysteine 24–cysteine 41, cysteine 34–cysteine 59, cysteine 63–cysteine 71, and cysteine 72–cysteine 77.

It belongs to the three-finger toxin family. Short-chain subfamily. Type III alpha-neurotoxin sub-subfamily. In terms of tissue distribution, expressed by the venom gland.

It is found in the secreted. Binds with high affinity to muscle nicotinic acetylcholine receptor (nAChR) and hinders acetylcholine binding to the receptor, thereby impairing neuromuscular transmission. Competes with the binding of alpha-bungarotoxin on muscle AChR (from Torpedo) with an IC(50) of 0.18 uM. Causes muscle paralysis, spasms and increased respiration. The protein is Short neurotoxin 6 of Pseudonaja textilis (Eastern brown snake).